We begin with the raw amino-acid sequence, 314 residues long: Homoserine O-acetyltransferase (314 aa).

Cysteine 142 (acyl-thioester intermediate) is an active-site residue. The substrate site is built by lysine 163 and serine 192. Residue histidine 235 is the Proton acceptor of the active site. The active site involves glutamate 237. Residue arginine 249 participates in substrate binding.

Belongs to the MetA family.

It localises to the cytoplasm. The catalysed reaction is L-homoserine + acetyl-CoA = O-acetyl-L-homoserine + CoA. Its pathway is amino-acid biosynthesis; L-methionine biosynthesis via de novo pathway; O-acetyl-L-homoserine from L-homoserine: step 1/1. Its function is as follows. Transfers an acetyl group from acetyl-CoA to L-homoserine, forming acetyl-L-homoserine. This is Homoserine O-acetyltransferase from Azobacteroides pseudotrichonymphae genomovar. CFP2.